We begin with the raw amino-acid sequence, 112 residues long: T cell receptor alpha variable 30 (112 aa).

Residues 1–21 form the signal peptide; that stretch reads METLLKVLSGTLLWQLTWVRS. One can recognise an Ig-like domain in the interval 24–112; that stretch reads PVQSPQAVIL…YSGTYFCGTE (89 aa). N-linked (GlcNAc...) asparagine glycosylation is present at N42. An intrachain disulfide couples C43 to C109.

Alpha-beta TR is a heterodimer composed of an alpha and beta chain; disulfide-linked. The alpha-beta TR is associated with the transmembrane signaling CD3 coreceptor proteins to form the TR-CD3 (TcR or TCR). The assembly of alpha-beta TR heterodimers with CD3 occurs in the endoplasmic reticulum where a single alpha-beta TR heterodimer associates with one CD3D-CD3E heterodimer, one CD3G-CD3E heterodimer and one CD247 homodimer forming a stable octameric structure. CD3D-CD3E and CD3G-CD3E heterodimers preferentially associate with TR alpha and TR beta chains, respectively. The association of the CD247 homodimer is the last step of TcR assembly in the endoplasmic reticulum and is required for transport to the cell surface.

It localises to the cell membrane. In terms of biological role, v region of the variable domain of T cell receptor (TR) alpha chain that participates in the antigen recognition. Alpha-beta T cell receptors are antigen specific receptors which are essential to the immune response and are present on the cell surface of T lymphocytes. Recognize peptide-major histocompatibility (MH) (pMH) complexes that are displayed by antigen presenting cells (APC), a prerequisite for efficient T cell adaptive immunity against pathogens. Binding of alpha-beta TR to pMH complex initiates TR-CD3 clustering on the cell surface and intracellular activation of LCK that phosphorylates the ITAM motifs of CD3G, CD3D, CD3E and CD247 enabling the recruitment of ZAP70. In turn ZAP70 phosphorylates LAT, which recruits numerous signaling molecules to form the LAT signalosome. The LAT signalosome propagates signal branching to three major signaling pathways, the calcium, the mitogen-activated protein kinase (MAPK) kinase and the nuclear factor NF-kappa-B (NF-kB) pathways, leading to the mobilization of transcription factors that are critical for gene expression and essential for T cell growth and differentiation. The T cell repertoire is generated in the thymus, by V-(D)-J rearrangement. This repertoire is then shaped by intrathymic selection events to generate a peripheral T cell pool of self-MH restricted, non-autoaggressive T cells. Post-thymic interaction of alpha-beta TR with the pMH complexes shapes TR structural and functional avidity. The protein is T cell receptor alpha variable 30 of Homo sapiens (Human).